A 75-amino-acid polypeptide reads, in one-letter code: Putative DNA-directed RNA polymerase subunit omega (75 aa).

It belongs to the RNA polymerase subunit omega family.

The protein localises to the plastid. It localises to the chloroplast. The enzyme catalyses RNA(n) + a ribonucleoside 5'-triphosphate = RNA(n+1) + diphosphate. In terms of biological role, may be involved in RNA polymerase activity. The chain is Putative DNA-directed RNA polymerase subunit omega from Pyropia yezoensis (Susabi-nori).